Consider the following 300-residue polypeptide: Dihydroorotate dehydrogenase B (NAD(+)), catalytic subunit (300 aa).

FMN-binding positions include S21 and 45-46 (KS). Residues K45, 69 to 73 (NAVGL), and N125 each bind substrate. N125 lines the FMN pocket. C128 (nucleophile) is an active-site residue. FMN-binding residues include K163 and I187. Position 188-189 (188-189 (NT)) interacts with substrate. FMN-binding positions include G213, 239–240 (GG), and 261–262 (GT).

Belongs to the dihydroorotate dehydrogenase family. Type 1 subfamily. As to quaternary structure, heterotetramer of 2 PyrK and 2 PyrD type B subunits. It depends on FMN as a cofactor.

The protein localises to the cytoplasm. It carries out the reaction (S)-dihydroorotate + NAD(+) = orotate + NADH + H(+). Its pathway is pyrimidine metabolism; UMP biosynthesis via de novo pathway; orotate from (S)-dihydroorotate (NAD(+) route): step 1/1. Its function is as follows. Catalyzes the conversion of dihydroorotate to orotate with NAD(+) as electron acceptor. This chain is Dihydroorotate dehydrogenase B (NAD(+)), catalytic subunit (pyrD), found in Thermoplasma acidophilum (strain ATCC 25905 / DSM 1728 / JCM 9062 / NBRC 15155 / AMRC-C165).